Here is a 1022-residue protein sequence, read N- to C-terminus: Sodium/potassium-transporting ATPase subunit alpha (1022 aa).

The propeptide occupies 1–5 (MGKGA). Positions 1 to 34 (MGKGAASEKYQPAATSENAKNSKKSKSKTTDLDE) are disordered. Topologically, residues 6 to 87 (ASEKYQPAAT…NALTPPPTTP (82 aa)) are cytoplasmic. A Phosphoserine; by PKC modification is found at Ser16. Residues 82–84 (PPP) form an interaction with phosphoinositide-3 kinase region. Residues 88–108 (EWIKFCRQLFGGFSILLWTGA) traverse the membrane as a helical segment. Residues 109-131 (ILCFLAYGIQVATVDNPANDNLY) lie on the Lumenal side of the membrane. Residues 132–152 (LGVVLSTVVIITGCFSYYQEA) form a helical membrane-spanning segment. The Cytoplasmic segment spans residues 153-288 (KSSKIMDSFK…VGQTPIAAEI (136 aa)). The disordered stretch occupies residues 215–235 (NSSLTGESEPQSRSPEYSSEN). Residues 289 to 308 (EHFIHIITGVAVFLGVSFFI) traverse the membrane as a helical segment. The Lumenal portion of the chain corresponds to 309–320 (LSLILGYTWLEA). Residues 321 to 338 (VIFLIGIIVANVPEGLLA) form a helical membrane-spanning segment. The Cytoplasmic segment spans residues 339–771 (TVTVCLTLTA…EEGRLIFDNL (433 aa)). Asp376 serves as the catalytic 4-aspartylphosphate intermediate. Mg(2+) contacts are provided by Asp716 and Asp720. A helical transmembrane segment spans residues 772 to 791 (KKSIAYTLTSNIPEITPFLV). At 792 to 801 (FIIANVPLPL) the chain is on the lumenal side. Residues 802 to 822 (GTVTILCIDLGTDMVPAISLA) form a helical membrane-spanning segment. Over 823–842 (YERAESDIMKRQPRNPKTDK) the chain is Cytoplasmic. The chain crosses the membrane as a helical span at residues 843–865 (LVNERLISMAYGQIGMIQALGGF). Residues 866–917 (FSYFVILAENGFLPIDLIGIREKWDELWTQDLEDSYGQQWTYEQRKIVEYTC) lie on the Lumenal side of the membrane. A helical membrane pass occupies residues 918–937 (HTSFFVSIVIVQWADLIICK). Residues 938 to 950 (TRRNSIFQQGMKN) are Cytoplasmic-facing. Ser942 carries the phosphoserine; by PKA modification. A helical membrane pass occupies residues 951-969 (KILIFGLFEETALAAFLSY). The Lumenal portion of the chain corresponds to 970–984 (TPGTDIALRMYPLKP). The helical transmembrane segment at 985–1005 (SWWFCAFPYSLIIFLYDEARR) threads the bilayer. Residues 1006-1022 (FILRRNPGGWVEQETYY) are Cytoplasmic-facing.

The protein belongs to the cation transport ATPase (P-type) (TC 3.A.3) family. Type IIC subfamily. As to quaternary structure, the sodium/potassium-transporting ATPase is composed of a catalytic alpha subunit, an auxiliary non-catalytic beta subunit and an additional regulatory subunit.

The protein resides in the cell membrane. The enzyme catalyses K(+)(out) + Na(+)(in) + ATP + H2O = K(+)(in) + Na(+)(out) + ADP + phosphate + H(+). Functionally, this is the catalytic component of the active enzyme, which catalyzes the hydrolysis of ATP coupled with the exchange of sodium and potassium ions across the plasma membrane. This action creates the electrochemical gradient of sodium and potassium ions, providing the energy for active transport of various nutrients. This Tetronarce californica (Pacific electric ray) protein is Sodium/potassium-transporting ATPase subunit alpha.